A 176-amino-acid chain; its full sequence is Glutathione-regulated potassium-efflux system ancillary protein KefF (176 aa).

FMN is bound by residues His8, 14–17 (SHAN), 65–68 (MQWY), and 105–108 (TTGG).

Belongs to the NAD(P)H dehydrogenase (quinone) family. KefF subfamily. As to quaternary structure, homodimer. Interacts with KefC. FMN serves as cofactor.

The protein localises to the cell inner membrane. The catalysed reaction is a quinone + NADH + H(+) = a quinol + NAD(+). It catalyses the reaction a quinone + NADPH + H(+) = a quinol + NADP(+). Regulatory subunit of a potassium efflux system that confers protection against electrophiles. Required for full activity of KefC. Shows redox enzymatic activity, but this enzymatic activity is not required for activation of KefC. This chain is Glutathione-regulated potassium-efflux system ancillary protein KefF, found in Salmonella gallinarum (strain 287/91 / NCTC 13346).